A 224-amino-acid polypeptide reads, in one-letter code: Transcription cofactor HES-6 (224 aa).

Positions 1 to 31 are disordered; it reads MAPSQAPSRDRAGQEDEDRWEARGDRKARKP. The span at 8–25 shows a compositional bias: basic and acidic residues; sequence SRDRAGQEDEDRWEARGD. Positions 25-77 constitute a bHLH domain; that stretch reads DRKARKPLVEKKRRARINESLQELRLLLAGTEVQAKLENAEVLELTVRRVQGA. The Orange domain maps to 96 to 129; the sequence is FAAGYIQCMHEVHTFVSTCQAIDATVSAELLNHL. Residues 146–209 are disordered; it reads GDSLAGLPGG…GPDLVSTSLG (64 aa). Low complexity predominate over residues 158-171; the sequence is RSSWPPGGSPESPL. Acidic residues predominate over residues 181-190; it reads LCSDLEEIPE. Residues 221-224 carry the WRPW motif motif; that stretch reads WRPW.

As to quaternary structure, transcription repression requires formation of a complex with a corepressor protein of the Groucho/TLE family. Interacts with HES1. In terms of tissue distribution, expressed in both undifferentiated and differentiated cells. High levels of expression are observed in several embryonic tissues including the nervous system, muscle and thymus. In the nervous system, initially expressed in the closing neural tube, then in the spinal cord, cranial and dorsal root ganglia, and brain neuroepithelium. Also expressed in epithelial cells of the embryonic respiratory, urinary and digestive systems. In the limb buds, expressed in skeletal muscle and presumptive tendons.

It is found in the nucleus. Functionally, does not bind DNA itself but suppresses both HES1-mediated N box-dependent transcriptional repression and binding of HES1 to E box sequences. Also suppresses HES1-mediated inhibition of the heterodimer formed by ASCL1/MASH1 and TCF3/E47, allowing ASCL1 and TCF3 to up-regulate transcription in its presence. Promotes cell differentiation. The sequence is that of Transcription cofactor HES-6 from Mus musculus (Mouse).